The chain runs to 265 residues: Mlc titration factor A (265 aa).

Zn(2+)-binding residues include His111, His148, His152, and Glu211.

This sequence belongs to the MtfA family. Interacts with Mlc. Zn(2+) serves as cofactor.

It is found in the cytoplasm. Functionally, involved in the modulation of the activity of the glucose-phosphotransferase system (glucose-PTS). Interacts with the transcriptional repressor Mlc, preventing its interaction with DNA and leading to the modulation of expression of genes regulated by Mlc, including ptsG, which encodes the PTS system glucose-specific EIICB component. Shows zinc-dependent metallopeptidase activity. In Salmonella paratyphi A (strain AKU_12601), this protein is Mlc titration factor A.